The following is a 254-amino-acid chain: Mitochondrial cardiolipin hydrolase (254 aa).

The Mitochondrial intermembrane segment spans residues 1 to 9 (MERFRWQVA). Residues 1–43 (MERFRWQVAAVAAVGLALALEALPSVLCWLRAGRRQQQRPPRR) form a required for mitochondrial localization region. Residues 10 to 32 (AVAAVGLALALEALPSVLCWLRA) traverse the membrane as a helical segment. Topologically, residues 33–254 (GRRQQQRPPR…SKCSHHLSQV (222 aa)) are cytoplasmic. The segment at 49 to 82 (PSQVTCTEALLQAPGEAPSGPPAGCRCSLPHGES) adopts a C3H1-type; atypical zinc-finger fold. The region spanning 155 to 182 (DLGYMHHKFAIVDKKVLITGSLNWTTQA) is the PLD phosphodiesterase domain. Residues His-160, Lys-162, and Asp-167 contribute to the active site.

The protein belongs to the phospholipase D family. MitoPLD/Zucchini subfamily. In terms of assembly, homodimer. Interacts with MOV10L1. Interacts with MIGA1 and MIGA2; possibly facilitating homodimer formation. Interacts with GK2.

The protein localises to the mitochondrion outer membrane. The protein resides in the nucleus membrane. It is found in the cell membrane. It localises to the golgi apparatus. It carries out the reaction a cardiolipin + H2O = a 1,2-diacyl-sn-glycero-3-phospho-(1'-sn-glycerol) + a 1,2-diacyl-sn-glycero-3-phosphate + H(+). With respect to regulation, single stranded DNA (ssDNA) hydrolase activity does not depend upon, but is stimulated by the presence of Ca(2+) and Mn(2+). MIGA1 and MIGA2 increase PLD6 self-association affinity and affects the homodimer conformation facilitating its phospholipase activity over the nuclease activity. MYC induces its expression and stimulates its phospholipase activity. In terms of biological role, presents phospholipase and nuclease activities, depending on the different physiological conditions. Interaction with Mitoguardin (MIGA1 or MIGA2) affects the dimer conformation, facilitating the lipase activity over the nuclease activity. Plays a key role in mitochondrial fusion and fission via its phospholipase activity. In its phospholipase role, it uses the mitochondrial lipid cardiolipin as substrate to generate phosphatidate (PA or 1,2-diacyl-sn-glycero-3-phosphate), a second messenger signaling lipid. Production of PA facilitates Mitofusin-mediated fusion, whereas the cleavage of PA by the Lipin family of phosphatases produces diacylgycerol (DAG) which promotes mitochondrial fission. Both Lipin and DAG regulate mitochondrial dynamics and membrane fusion/fission, important processes for adapting mitochondrial metabolism to changes in cell physiology. Mitochondrial fusion enables cells to cope with the increased nucleotide demand during DNA synthesis. Mitochondrial function and dynamics are closely associated with biological processes such as cell growth, proliferation, and differentiation. Mediator of MYC activity, promotes mitochondrial fusion and activates AMPK which in turn inhibits YAP/TAZ, thereby inducing cell growth and proliferation. The endonuclease activity plays a critical role in PIWI-interacting RNA (piRNA) biogenesis during spermatogenesis. Implicated in spermatogenesis and sperm fertility in testicular germ cells, its single strand-specific nuclease activity is critical for the biogenesis/maturation of PIWI-interacting RNA (piRNA). MOV10L1 selectively binds to piRNA precursors and funnels them to the endonuclease that catalyzes the first cleavage step of piRNA processing to generate piRNA intermediate fragments that are subsequently loaded to Piwi proteins. Cleaves either DNA or RNA substrates with similar affinity, producing a 5' phosphate end, in this way it participates in the processing of primary piRNA transcripts. piRNAs provide essential protection against the activity of mobile genetic elements. piRNA-mediated transposon silencing is thus critical for maintaining genome stability, in particular in germline cells when transposons are mobilized as a consequence of wide-spread genomic demethylation. PA may act as signaling molecule in the recognition/transport of the precursor RNAs of primary piRNAs. Interacts with tesmin in testes, suggesting a role in spermatogenesis via association with its interacting partner. The polypeptide is Mitochondrial cardiolipin hydrolase (PLD6) (Canis lupus familiaris (Dog)).